The chain runs to 538 residues: MAVISKKIPAPDKVEIKTALLSVFDKTGIVELAQALSEQGVRLLSTGGTYKAIAAAGLAVTDVSEITGFPEIMDGRVKTLHPTVHGGLLAIRDDSEHQEAMKTHGIEAIDLAVINLYPFEDVRAAGGDYPTTVENIDIGGPAMIRASAKNHAYVTILTDPNDYAEFTEQLSADGGKTAYAFRQRMAAKAYARTAAYDAVISNWFAEALSIDTPRHRVIGGALKEEMRYGENPHQKAAFYVTGEKRPGVSTAALLQGKQLSYNNINDTDAAYELVAEFLPEKEPACAIIKHANPCGVATGSSLVEAYRRALACDSVSAFGGIIALNRTLDAETAEEIVKLFTEVIIAPDVTEEAKAIIARKPNLRLLSAGGLPDPRAAGLTAKTVSGGLLVQSRDNGMVEDLELKVVTKRAPTAQELDDMKFAFKIGKHVKSNAVVYAKDGQTAGIGAGQMSRVDSARIAALKAEEAAKALGLAVPMTHGSAVASEAFLPFADGLLSMIAAGATAVIQPGGSMRDQEVIDAADEHGIAMVFTGMRHFRH.

The region spanning 8-158 is the MGS-like domain; sequence IPAPDKVEIK…KNHAYVTILT (151 aa).

It belongs to the PurH family.

The catalysed reaction is (6R)-10-formyltetrahydrofolate + 5-amino-1-(5-phospho-beta-D-ribosyl)imidazole-4-carboxamide = 5-formamido-1-(5-phospho-D-ribosyl)imidazole-4-carboxamide + (6S)-5,6,7,8-tetrahydrofolate. It carries out the reaction IMP + H2O = 5-formamido-1-(5-phospho-D-ribosyl)imidazole-4-carboxamide. Its pathway is purine metabolism; IMP biosynthesis via de novo pathway; 5-formamido-1-(5-phospho-D-ribosyl)imidazole-4-carboxamide from 5-amino-1-(5-phospho-D-ribosyl)imidazole-4-carboxamide (10-formyl THF route): step 1/1. It functions in the pathway purine metabolism; IMP biosynthesis via de novo pathway; IMP from 5-formamido-1-(5-phospho-D-ribosyl)imidazole-4-carboxamide: step 1/1. The chain is Bifunctional purine biosynthesis protein PurH from Rhizobium leguminosarum bv. trifolii (strain WSM2304).